We begin with the raw amino-acid sequence, 334 residues long: DNA-directed RNA polymerase subunit alpha (334 aa).

Residues methionine 1–lysine 231 are alpha N-terminal domain (alpha-NTD). The tract at residues isoleucine 245 to proline 334 is alpha C-terminal domain (alpha-CTD).

It belongs to the RNA polymerase alpha chain family. Homodimer. The RNAP catalytic core consists of 2 alpha, 1 beta, 1 beta' and 1 omega subunit. When a sigma factor is associated with the core the holoenzyme is formed, which can initiate transcription.

It catalyses the reaction RNA(n) + a ribonucleoside 5'-triphosphate = RNA(n+1) + diphosphate. DNA-dependent RNA polymerase catalyzes the transcription of DNA into RNA using the four ribonucleoside triphosphates as substrates. This Nitrosospira multiformis (strain ATCC 25196 / NCIMB 11849 / C 71) protein is DNA-directed RNA polymerase subunit alpha.